The chain runs to 139 residues: Large ribosomal subunit protein bL17 (139 aa).

The tract at residues 120–139 (ESAKGQDSGPVHVEGDEEAA) is disordered.

It belongs to the bacterial ribosomal protein bL17 family. In terms of assembly, part of the 50S ribosomal subunit. Contacts protein L32.

In Parvibaculum lavamentivorans (strain DS-1 / DSM 13023 / NCIMB 13966), this protein is Large ribosomal subunit protein bL17.